Here is a 217-residue protein sequence, read N- to C-terminus: Eukaryotic translation initiation factor 4E (217 aa).

The segment covering 1-11 has biased composition (low complexity); it reads MATVEPETTPT. Residues 1-27 are disordered; the sequence is MATVEPETTPTTNPPPAEEEKTESNQE. Alanine 2 carries the N-acetylalanine modification. A Phosphothreonine modification is found at threonine 22. Positions 37-40 are EIF4EBP1/2/3 binding; the sequence is HPLQ. 56–57 provides a ligand contact to mRNA; that stretch reads WQ. The tract at residues 73–77 is EIF4EBP1/2/3 binding; it reads WALYN. Position 102-103 (102-103) interacts with mRNA; it reads WE. The tract at residues 132 to 139 is EIF4EBP1/2/3 binding; it reads ETLLCLIG. MRNA is bound by residues 157–162 and 205–207; these read RAKGDK and TKS. The residue at position 209 (serine 209) is a Phosphoserine; by PKC and MKNK2.

This sequence belongs to the eukaryotic initiation factor 4E family. As to quaternary structure, eIF4F is a multi-subunit complex, the composition of which varies with external and internal environmental conditions. It is composed of at least EIF4A, EIF4E and EIF4G1/EIF4G3. EIF4E is also known to interact with other partners. Interacts with EIF4ENIF1/4E-T; promotes recruitment to P-bodies and import into the nucleus. Hypophosphorylated EIF4EBP1, EIF4EBP2 and EIF4EBP3 compete with EIF4G1/EIF4G3 to interact with EIF4E; insulin stimulated MAP-kinase (MAPK1 and MAPK3) phosphorylation of EIF4EBP1 causes dissociation of the complex allowing EIF4G1/EIF4G3 to bind and consequent initiation of translation. Interacts mutually exclusive with EIF4A1 or EIF4A2. Interacts with NGDN and PIWIL2. Component of the CYFIP1-EIF4E-FMR1 complex composed of CYFIP, EIF4E and FMR1. Interacts directly with CYFIP1. Interacts with CLOCK. Binds to MKNK2 in nucleus. Interacts with LIMD1, WTIP and AJUBA. Interacts with APOBEC3G in an RNA-dependent manner. Interacts with LARP1. Interacts with METTL3. Interacts with RBM24; this interaction prevents EIF4E from binding to p53/TP53 mRNA and inhibits the assembly of translation initiation complex. Interacts with DDX3X; interaction is direct and in an RNA-independent manner; this interaction enhances EIF4E cap-binding ability and is required for the repression of cap-dependent translation and the increase of IRES-mediated translation. DDX3X competes with EIF4G1 for interaction with EIF4E. Interacts with EIF4G1; which in a mutual exclusive interaction associates either with EIF1 or with EIF4E on a common binding site. Interacts with BTG4 and CNOT7. Interacts with LRPPRC (via N-terminus); the interaction promotes association of EIF4E with 4ESE-containing mRNAs. Interacts with mRNA cleavage enzyme CPSF3 and its cofactor CPSF1. Interacts (via RING-type zinc finger) with PML; the interaction results in conformational changes of both interacting proteins and reduces EIF4E affinity for the 5' m7G cap of mRNA, thus reducing EIF4E-mediated mRNA nuclear export. Interacts with homeobox protein HHEX/PRH; the interaction inhibits EIF4E-mediated mRNA nuclear export. Interacts with homeobox protein HOXA9; the interaction positively regulates EIF4E-mediated mRNA nuclear export. Interacts with homeobox protein EMX2. (Microbial infection) Interacts with murine norovirus viral genome-linked protein; this interaction plays a role in translation of viral proteins. Phosphorylation increases the ability of the protein to bind to mRNA caps and to form the eIF4F complex. Phosphorylation also enhances its mRNA transport function. Phosphorylation at Ser-209 is not essential for protein synthesis.

The protein localises to the cytoplasm. It is found in the P-body. It localises to the stress granule. Its subcellular location is the nucleus. The protein resides in the nucleus speckle. The protein localises to the nuclear body. In terms of biological role, acts in the cytoplasm to initiate and regulate protein synthesis and is required in the nucleus for export of a subset of mRNAs from the nucleus to the cytoplasm which promotes processes such as RNA capping, processing and splicing. Component of the protein complex eIF4F, which is involved in the recognition of the mRNA cap, ATP-dependent unwinding of 5'-terminal secondary structure and recruitment of mRNA to the ribosome. This protein recognizes and binds the 7-methylguanosine (m7G)-containing mRNA cap during an early step in the initiation of protein synthesis and facilitates ribosome binding by inducing the unwinding of the mRNAs secondary structures. Together with EIF4G1, antagonizes the scanning promoted by EIF1-EIF4G1 and is required for TISU translation, a process where the TISU element recognition makes scanning unnecessary. In addition to its role in translation initiation, also acts as a regulator of translation and stability in the cytoplasm. Component of the CYFIP1-EIF4E-FMR1 complex which binds to the mRNA cap and mediates translational repression: in the complex, EIF4E mediates the binding to the mRNA cap. Component of a multiprotein complex that sequesters and represses translation of proneurogenic factors during neurogenesis. In P-bodies, component of a complex that mediates the storage of translationally inactive mRNAs in the cytoplasm and prevents their degradation. May play an important role in spermatogenesis through translational regulation of stage-specific mRNAs during germ cell development. As well as its roles in translation, also involved in mRNA nucleocytoplasmic transport. Its role in mRNA export from the nucleus to the cytoplasm relies on its ability to bind the m7G cap of RNAs and on the presence of the 50-nucleotide EIF4E sensitivity element (4ESE) in the 3'UTR of sensitive transcripts. Interaction with the 4ESE is mediated by LRPPRC which binds simultaneously to both EIF4E and the 4ESE, thereby acting as a platform for assembly for the RNA export complex. EIF4E-dependent mRNA export is independent of ongoing protein or RNA synthesis and is also NFX1-independent but is XPO1-dependent with LRPPRC interacting with XPO1 to form an EIF4E-dependent mRNA export complex. Alters the composition of the cytoplasmic face of the nuclear pore to promote RNA export by reducing RANBP2 expression, relocalizing nucleoporin NUP214 and increasing expression of RANBP1 and RNA export factors DDX19 and GLE1. Promotes the nuclear export of cyclin CCND1 mRNA. Promotes the nuclear export of NOS2/iNOS mRNA. Promotes the nuclear export of MDM2 mRNA. Also promotes the export of additional mRNAs, including others involved in the cell cycle. In the nucleus, binds to capped splice factor-encoding mRNAs and stimulates their nuclear export to enhance splice factor production by increasing their cytoplasmic availability to the translation machinery. May also regulate splicing through interaction with the spliceosome in an RNA and m7G cap-dependent manner. Also binds to some pre-mRNAs and may play a role in their recruitment to the spliceosome. Promotes steady-state capping of a subset of coding and non-coding RNAs by mediating nuclear export of capping machinery mRNAs including RNMT, RNGTT and RAMAC to enhance their translation. Stimulates mRNA 3'-end processing by promoting the expression of several core cleavage complex factors required for mRNA cleavage and polyadenylation, and may also have a direct effect through its interaction with the CPSF3 cleavage enzyme. Rescues cells from apoptosis by promoting activation of serine/threonine-protein kinase AKT1 through mRNA export of NBS1 which potentiates AKT1 phosphorylation and also through mRNA export of AKT1 effectors, allowing for increased production of these proteins. This is Eukaryotic translation initiation factor 4E from Mus musculus (Mouse).